A 235-amino-acid polypeptide reads, in one-letter code: Ubiquitin-like-conjugating enzyme ATG10 (235 aa).

Residue Cys-196 is the Glycyl thioester intermediate of the active site.

Belongs to the ATG10 family. In terms of assembly, forms homooligomers. Interacts with ATG7 and ATG12.

It is found in the preautophagosomal structure membrane. E2-like enzyme required for the cytoplasm to vacuole transport (Cvt), autophagy and nucleophagy. Acts as an E2-like enzyme that catalyzes the conjugation of ATG12 to ATG5. ATG12 conjugation to ATG5 is required for proper localization of ATG8 to the preautophagosomal structure (PAS). Likely serves as an ATG5-recognition molecule. Autophagy is required for proper vegetative growth, asexual/sexual reproduction, and full virulence. Autophagy is particularly involved in the biosynthesis of deoxynivalenol (DON), an important virulence determinant. The polypeptide is Ubiquitin-like-conjugating enzyme ATG10 (Gibberella zeae (strain ATCC MYA-4620 / CBS 123657 / FGSC 9075 / NRRL 31084 / PH-1) (Wheat head blight fungus)).